A 559-amino-acid polypeptide reads, in one-letter code: MAAQGFLLIASFLLILLVLAKPLGSGLARLIAAVPLPGVAGVERILWRTLGITDHEMNWRQYLLALLTLNLLGLGILFCLLFWQEWLPLNPQRLPGLSWDLALNTAVSFVTNTNWQAYSGESTLSYFSQMAGLTVQNFLSAATGIAVVFALIRAFTRQNVHTLGNAWQDLVRITLWILFPVALIIALFFIQQGVPQNLSAYQPITTLEGAKQLLPMGPVASQEAIKMLGTNGGGFFNANSSHPFENPTALTNLAQMLAIFLIPAALCFAFGEAAGDRRQGRALLWAMSFIFVVCVAVVMWAEVQGNPHLLAAGADSSVNMEGKETRFGVLASSLFAVVTTAASCGAVNAMHDSFTALGGMVPMWLMQIGEVVFGGVGSGLYGMLLFVLLAVFIAGLMIGRTPEYLGKKIDVREMKMTALAILVTPMLVLLGSALAMMTDAGRSAMLNPGPHGFSEVLYAVSSAANNNGSAFAGLSANSPFWNCLLAFCMFVGRFGVIIPVMAIAGSLVSKKVQPASQGTLATHGALFIGLLIGTVLLVGALTFIPALALGPVAEHFSLP.

Transmembrane regions (helical) follow at residues 5–25 (GFLL…PLGS), 27–47 (LARL…RILW), 63–83 (LLAL…LLFW), 132–152 (GLTV…FALI), 170–190 (LVRI…LFFI), 253–273 (LAQM…FGEA), 283–303 (LLWA…WAEV), 327–347 (FGVL…CGAV), 356–376 (ALGG…FGGV), 379–399 (GLYG…LMIG), 416–436 (MTAL…ALAM), 484–504 (LLAF…MAIA), and 524–544 (GALF…LTFI).

It belongs to the KdpA family. The system is composed of three essential subunits: KdpA, KdpB and KdpC.

Its subcellular location is the cell inner membrane. Its function is as follows. Part of the high-affinity ATP-driven potassium transport (or Kdp) system, which catalyzes the hydrolysis of ATP coupled with the electrogenic transport of potassium into the cytoplasm. This subunit binds the periplasmic potassium ions and delivers the ions to the membrane domain of KdpB through an intramembrane tunnel. The polypeptide is Potassium-transporting ATPase potassium-binding subunit (Salmonella enteritidis PT4 (strain P125109)).